The following is a 59-amino-acid chain: MIASIWYAELGCASAIAFIFPLIFCVKLDYKCIGIFIINSLHDQYYKPDIMLERAIIIA.

The signal sequence occupies residues 1–17; the sequence is MIASIWYAELGCASAIA.

This is an uncharacterized protein from Rickettsia prowazekii (strain Madrid E).